The following is a 761-amino-acid chain: Membrane protein of ER body-like protein (761 aa).

2 disordered regions span residues 1–85 (MGSA…GEHT) and 120–162 (GSES…RSRE). The segment covering 22-31 (EVEEDDEQIV) has biased composition (acidic residues). A compositionally biased stretch (low complexity) spans 48-65 (VDSSTITNTSSSSSSSFS). The segment covering 74-85 (PDFHSNGDGEHT) has biased composition (basic and acidic residues). The span at 136–154 (TADLNGEQTQLEPENGSTS) shows a compositional bias: polar residues. Residues 186–206 (IEEEVDFEDVEYHDVENMMDK) are a coiled coil. 2 disordered regions span residues 338 to 374 (SSSV…TGSA) and 416 to 448 (QTQQ…PSHG). Polar residues predominate over residues 416–432 (QTQQKIDNDDSSTADGN). The next 5 helical transmembrane spans lie at 549 to 569 (IVYG…SAAG), 573 to 593 (SMLN…ILII), 640 to 660 (VAIL…YFSF), 670 to 690 (VASV…AKAH), and 702 to 722 (ILYY…VGNF).

Belongs to the CCC1 family.

It localises to the endoplasmic reticulum membrane. Functionally, not essential for the accumulation of ER body components, including PYK10. The sequence is that of Membrane protein of ER body-like protein (MEBL) from Arabidopsis thaliana (Mouse-ear cress).